We begin with the raw amino-acid sequence, 123 residues long: Alpha-lactalbumin (123 aa).

The C-type lysozyme domain occupies K1–E123. 4 disulfide bridges follow: C6–C120, C28–C111, C61–C77, and C73–C91. The N-linked (GlcNAc...) asparagine glycan is linked to N45. The Ca(2+) site is built by K79, D82, D84, D87, and D88.

It belongs to the glycosyl hydrolase 22 family. As to quaternary structure, lactose synthase (LS) is a heterodimer of a catalytic component, beta1,4-galactosyltransferase (beta4Gal-T1) and a regulatory component, alpha-lactalbumin (LA). In terms of tissue distribution, mammary gland specific. Secreted in milk.

It localises to the secreted. Its function is as follows. Regulatory subunit of lactose synthase, changes the substrate specificity of galactosyltransferase in the mammary gland making glucose a good acceptor substrate for this enzyme. This enables LS to synthesize lactose, the major carbohydrate component of milk. In other tissues, galactosyltransferase transfers galactose onto the N-acetylglucosamine of the oligosaccharide chains in glycoproteins. The polypeptide is Alpha-lactalbumin (LALBA) (Papio cynocephalus (Yellow baboon)).